We begin with the raw amino-acid sequence, 227 residues long: NADH-quinone oxidoreductase subunit C (227 aa).

It belongs to the complex I 30 kDa subunit family. In terms of assembly, NDH-1 is composed of 14 different subunits. Subunits NuoB, C, D, E, F, and G constitute the peripheral sector of the complex.

It is found in the cell inner membrane. The catalysed reaction is a quinone + NADH + 5 H(+)(in) = a quinol + NAD(+) + 4 H(+)(out). Its function is as follows. NDH-1 shuttles electrons from NADH, via FMN and iron-sulfur (Fe-S) centers, to quinones in the respiratory chain. The immediate electron acceptor for the enzyme in this species is believed to be ubiquinone. Couples the redox reaction to proton translocation (for every two electrons transferred, four hydrogen ions are translocated across the cytoplasmic membrane), and thus conserves the redox energy in a proton gradient. This Legionella pneumophila (strain Corby) protein is NADH-quinone oxidoreductase subunit C.